A 115-amino-acid polypeptide reads, in one-letter code: UPF0738 protein SAV1005 (115 aa).

Belongs to the UPF0738 family.

The chain is UPF0738 protein SAV1005 from Staphylococcus aureus (strain Mu50 / ATCC 700699).